The following is a 156-amino-acid chain: Cyclic pyranopterin monophosphate synthase (156 aa).

Residues 75-77 (LCH) and 111-112 (ME) contribute to the substrate site. The active site involves aspartate 126.

This sequence belongs to the MoaC family. In terms of assembly, homohexamer; trimer of dimers.

The enzyme catalyses (8S)-3',8-cyclo-7,8-dihydroguanosine 5'-triphosphate = cyclic pyranopterin phosphate + diphosphate. It functions in the pathway cofactor biosynthesis; molybdopterin biosynthesis. In terms of biological role, catalyzes the conversion of (8S)-3',8-cyclo-7,8-dihydroguanosine 5'-triphosphate to cyclic pyranopterin monophosphate (cPMP). The sequence is that of Cyclic pyranopterin monophosphate synthase from Caulobacter sp. (strain K31).